Here is a 418-residue protein sequence, read N- to C-terminus: Histidine--tRNA ligase (418 aa).

It belongs to the class-II aminoacyl-tRNA synthetase family.

Its subcellular location is the cytoplasm. It catalyses the reaction tRNA(His) + L-histidine + ATP = L-histidyl-tRNA(His) + AMP + diphosphate + H(+). This is Histidine--tRNA ligase from Methanococcus maripaludis (strain C6 / ATCC BAA-1332).